Reading from the N-terminus, the 215-residue chain is Ribonuclease T (215 aa).

The 175-residue stretch at 20 to 194 (VVIDVETAGF…YDTMQTAKLF (175 aa)) folds into the Exonuclease domain. Mg(2+) is bound by residues aspartate 23, glutamate 25, histidine 181, and aspartate 186. Histidine 181 acts as the Proton donor/acceptor in catalysis.

Belongs to the RNase T family. As to quaternary structure, homodimer. Mg(2+) serves as cofactor.

Trims short 3' overhangs of a variety of RNA species, leaving a one or two nucleotide 3' overhang. Responsible for the end-turnover of tRNA: specifically removes the terminal AMP residue from uncharged tRNA (tRNA-C-C-A). Also appears to be involved in tRNA biosynthesis. The chain is Ribonuclease T from Yersinia enterocolitica serotype O:8 / biotype 1B (strain NCTC 13174 / 8081).